A 283-amino-acid polypeptide reads, in one-letter code: MTVQKSKNPQVDIAEDNAFFPSEYSLSQYTSPVSDLDGVDYPKPYRGKHKILVIAADERYLPTDNGKLFSTGNHPIETLLPLYHLHAAGFEFEVATISGLMTKFEYWAMPHKDEKVMPFFEQHKSLFRNPKKLADVVASLNADSEYAAIFVPGGHGALIGLPESEDVAAALQWAIENDRFVISLCHGPAAFLALRHGDNPLNGYSICAFPDAADKQTPEIGYMPGHLTWYFGEELKKMGMNIINDDITGRVHKDRKVLTGDSPFAANALGKLAAQEMLAAYAG.

Zn(2+)-binding residues include His-86, Glu-91, and His-123. Cys-185 acts as the Nucleophile in catalysis.

The protein belongs to the peptidase C56 family. HchA subfamily. As to quaternary structure, homodimer.

It localises to the cytoplasm. It catalyses the reaction N(omega)-(1-hydroxy-2-oxopropyl)-L-arginyl-[protein] + H2O = lactate + L-arginyl-[protein] + H(+). It carries out the reaction N(6)-(1-hydroxy-2-oxopropyl)-L-lysyl-[protein] + H2O = lactate + L-lysyl-[protein] + H(+). The enzyme catalyses S-(1-hydroxy-2-oxopropyl)-L-cysteinyl-[protein] + H2O = lactate + L-cysteinyl-[protein] + H(+). The catalysed reaction is N(omega)-(1-hydroxy-2-oxoethyl)-L-arginyl-[protein] + H2O = L-arginyl-[protein] + glycolate + H(+). It catalyses the reaction N(6)-(1-hydroxy-2-oxoethyl)-L-lysyl-[protein] + H2O = glycolate + L-lysyl-[protein] + H(+). It carries out the reaction S-(1-hydroxy-2-oxoethyl)-L-cysteinyl-[protein] + H2O = glycolate + L-cysteinyl-[protein] + H(+). The enzyme catalyses N(2)-(1-hydroxy-2-oxopropyl)-dGTP + H2O = lactate + dGTP + H(+). The catalysed reaction is N(2)-(1-hydroxy-2-oxopropyl)-GTP + H2O = lactate + GTP + H(+). It catalyses the reaction N(2)-(1-hydroxy-2-oxopropyl)-GDP + H2O = lactate + GDP + H(+). It carries out the reaction N(2)-(1-hydroxy-2-oxopropyl)-GMP + H2O = lactate + GMP + H(+). The enzyme catalyses N(2)-(1-hydroxy-2-oxoethyl)-dGTP + H2O = dGTP + glycolate + H(+). The catalysed reaction is N(2)-(1-hydroxy-2-oxoethyl)-GTP + H2O = glycolate + GTP + H(+). It catalyses the reaction N(2)-(1-hydroxy-2-oxoethyl)-GDP + H2O = glycolate + GDP + H(+). It carries out the reaction N(2)-(1-hydroxy-2-oxoethyl)-GMP + H2O = glycolate + GMP + H(+). The enzyme catalyses an N(2)-(1-hydroxy-2-oxopropyl)-guanosine in RNA + H2O = a guanosine in RNA + lactate + H(+). The catalysed reaction is an N(2)-(1-hydroxy-2-oxopropyl)-2'-deoxyguanosine in DNA + H2O = a 2'-deoxyguanosine in DNA + lactate + H(+). It catalyses the reaction an N(2)-(1-hydroxy-2-oxoethyl)-guanosine in RNA + H2O = a guanosine in RNA + glycolate + H(+). It carries out the reaction an N(2)-(1-hydroxy-2-oxoethyl)-2'-deoxyguanosine in DNA + H2O = a 2'-deoxyguanosine in DNA + glycolate + H(+). Its function is as follows. Protein and nucleotide deglycase that catalyzes the deglycation of the Maillard adducts formed between amino groups of proteins or nucleotides and reactive carbonyl groups of glyoxals. Thus, functions as a protein deglycase that repairs methylglyoxal- and glyoxal-glycated proteins, and releases repaired proteins and lactate or glycolate, respectively. Deglycates cysteine, arginine and lysine residues in proteins, and thus reactivates these proteins by reversing glycation by glyoxals. Acts on early glycation intermediates (hemithioacetals and aminocarbinols), preventing the formation of Schiff bases and advanced glycation endproducts (AGE). Also functions as a nucleotide deglycase able to repair glycated guanine in the free nucleotide pool (GTP, GDP, GMP, dGTP) and in DNA and RNA. Is thus involved in a major nucleotide repair system named guanine glycation repair (GG repair), dedicated to reversing methylglyoxal and glyoxal damage via nucleotide sanitization and direct nucleic acid repair. Plays an important role in protecting cells from carbonyl stress. This chain is Protein/nucleic acid deglycase HchA, found in Escherichia coli O45:K1 (strain S88 / ExPEC).